A 148-amino-acid polypeptide reads, in one-letter code: NADH-quinone oxidoreductase subunit A (148 aa).

3 consecutive transmembrane segments (helical) span residues 14-34 (WAFAIFLIIAIGLCCLMLVGG), 68-88 (FYLVAMFFVIFDVEALYLYAW), and 98-118 (VGFVEAAIFILVLLAGLVYLV).

The protein belongs to the complex I subunit 3 family. As to quaternary structure, NDH-1 is composed of 13 different subunits. Subunits NuoA, H, J, K, L, M, N constitute the membrane sector of the complex.

The protein resides in the cell inner membrane. The enzyme catalyses a quinone + NADH + 5 H(+)(in) = a quinol + NAD(+) + 4 H(+)(out). Functionally, NDH-1 shuttles electrons from NADH, via FMN and iron-sulfur (Fe-S) centers, to quinones in the respiratory chain. The immediate electron acceptor for the enzyme in this species is believed to be ubiquinone. Couples the redox reaction to proton translocation (for every two electrons transferred, four hydrogen ions are translocated across the cytoplasmic membrane), and thus conserves the redox energy in a proton gradient. The polypeptide is NADH-quinone oxidoreductase subunit A (Klebsiella pneumoniae subsp. pneumoniae (strain ATCC 700721 / MGH 78578)).